Reading from the N-terminus, the 121-residue chain is Small ribosomal subunit protein uS11c (121 aa).

Belongs to the universal ribosomal protein uS11 family. In terms of assembly, part of the 30S ribosomal subunit.

It localises to the plastid. The protein localises to the chloroplast. The sequence is that of Small ribosomal subunit protein uS11c from Cyanidioschyzon merolae (strain NIES-3377 / 10D) (Unicellular red alga).